The sequence spans 262 residues: Global transcriptional regulator CodY (262 aa).

Positions 1 to 159 are GAF domain; that stretch reads MAHLLEKTRK…ASTVVGIQLL (159 aa). Positions 207–226 form a DNA-binding region, H-T-H motif; the sequence is ASVIADRIGITRSVIVNALR.

This sequence belongs to the CodY family.

It is found in the cytoplasm. DNA-binding global transcriptional regulator which is involved in the adaptive response to starvation and acts by directly or indirectly controlling the expression of numerous genes in response to nutrient availability. During rapid exponential growth, CodY is highly active and represses genes whose products allow adaptation to nutrient depletion. The protein is Global transcriptional regulator CodY of Streptococcus pneumoniae (strain JJA).